We begin with the raw amino-acid sequence, 457 residues long: Bifunctional protein GlmU (457 aa).

A pyrophosphorylase region spans residues 1-229 (MYNCAIILAA…YEEIMGVNSR (229 aa)). Residues 8 to 11 (LAAG), Lys22, Gln73, and 78 to 79 (GT) contribute to the UDP-N-acetyl-alpha-D-glucosamine site. Asp103 contributes to the Mg(2+) binding site. Positions 140, 155, 170, and 227 each coordinate UDP-N-acetyl-alpha-D-glucosamine. Asn227 is a Mg(2+) binding site. Residues 230–250 (VQLSEAEIVMRKRINHKHMVN) form a linker region. The N-acetyltransferase stretch occupies residues 251–457 (GVTFIDCEST…WLDKKGLLKK (207 aa)). 2 residues coordinate UDP-N-acetyl-alpha-D-glucosamine: Arg332 and Lys350. The active-site Proton acceptor is His362. UDP-N-acetyl-alpha-D-glucosamine-binding residues include Tyr365 and Asn376. Acetyl-CoA contacts are provided by residues 385 to 386 (NY), Ala422, and Arg439.

In the N-terminal section; belongs to the N-acetylglucosamine-1-phosphate uridyltransferase family. It in the C-terminal section; belongs to the transferase hexapeptide repeat family. In terms of assembly, homotrimer. Mg(2+) serves as cofactor.

The protein localises to the cytoplasm. The enzyme catalyses alpha-D-glucosamine 1-phosphate + acetyl-CoA = N-acetyl-alpha-D-glucosamine 1-phosphate + CoA + H(+). It catalyses the reaction N-acetyl-alpha-D-glucosamine 1-phosphate + UTP + H(+) = UDP-N-acetyl-alpha-D-glucosamine + diphosphate. The protein operates within nucleotide-sugar biosynthesis; UDP-N-acetyl-alpha-D-glucosamine biosynthesis; N-acetyl-alpha-D-glucosamine 1-phosphate from alpha-D-glucosamine 6-phosphate (route II): step 2/2. Its pathway is nucleotide-sugar biosynthesis; UDP-N-acetyl-alpha-D-glucosamine biosynthesis; UDP-N-acetyl-alpha-D-glucosamine from N-acetyl-alpha-D-glucosamine 1-phosphate: step 1/1. It participates in bacterial outer membrane biogenesis; LPS lipid A biosynthesis. In terms of biological role, catalyzes the last two sequential reactions in the de novo biosynthetic pathway for UDP-N-acetylglucosamine (UDP-GlcNAc). The C-terminal domain catalyzes the transfer of acetyl group from acetyl coenzyme A to glucosamine-1-phosphate (GlcN-1-P) to produce N-acetylglucosamine-1-phosphate (GlcNAc-1-P), which is converted into UDP-GlcNAc by the transfer of uridine 5-monophosphate (from uridine 5-triphosphate), a reaction catalyzed by the N-terminal domain. This is Bifunctional protein GlmU from Clostridium botulinum (strain ATCC 19397 / Type A).